The sequence spans 341 residues: MNTNSEQVLDQKSRPLRDLRISVTDRCNLRCTYCMPAEIFGQDYPFLPKGELLSFEELERLAKLFVHQFGVEKIRLTGGEPLMRKDMPELVGKLAGIKGIRDIAMTTNGVLLPVYADKLKKAGLKRVTVSLDSLDDERFKSINGRGVSVSKVLAGIEAAKKAGLGVKINMVVQKGVNEKDILPMARYFKEKGHILRFIEFMDVGNTNEWNRQSVVAKADIIRIINEDMPIEPIDPNYEGEVAKRYRYLDGSGEIGFISSVSDAFCTTCNRARLSAKGELFTCLFASSGFDLRTLIRSGQTDQELAEAIGTVWRNRDDQYSLDRALAKAVPRKKVEMSYIGG.

A Radical SAM core domain is found at Gln11–Glu231. Arg20 provides a ligand contact to GTP. Positions 27 and 31 each coordinate [4Fe-4S] cluster. Tyr33 contacts S-adenosyl-L-methionine. Residue Cys34 participates in [4Fe-4S] cluster binding. Arg75 serves as a coordination point for GTP. Gly79 is a binding site for S-adenosyl-L-methionine. Residue Thr106 coordinates GTP. Ser130 is an S-adenosyl-L-methionine binding site. Lys167 is a GTP binding site. Residue Met201 coordinates S-adenosyl-L-methionine. 2 residues coordinate [4Fe-4S] cluster: Cys265 and Cys268. Arg270–Arg272 serves as a coordination point for GTP. Cys282 is a binding site for [4Fe-4S] cluster.

Belongs to the radical SAM superfamily. MoaA family. Monomer and homodimer. [4Fe-4S] cluster serves as cofactor.

The catalysed reaction is GTP + AH2 + S-adenosyl-L-methionine = (8S)-3',8-cyclo-7,8-dihydroguanosine 5'-triphosphate + 5'-deoxyadenosine + L-methionine + A + H(+). It functions in the pathway cofactor biosynthesis; molybdopterin biosynthesis. Functionally, catalyzes the cyclization of GTP to (8S)-3',8-cyclo-7,8-dihydroguanosine 5'-triphosphate. This Bacillus licheniformis (strain ATCC 14580 / DSM 13 / JCM 2505 / CCUG 7422 / NBRC 12200 / NCIMB 9375 / NCTC 10341 / NRRL NRS-1264 / Gibson 46) protein is GTP 3',8-cyclase.